A 471-amino-acid polypeptide reads, in one-letter code: Mitochondrial distribution and morphology protein 10 (471 aa).

Residues 313 to 338 (SNSAATPPRIKNSDSQVLSNNSTDSK) are disordered. Over residues 325–338 (SDSQVLSNNSTDSK) the composition is skewed to polar residues.

This sequence belongs to the MDM10 family. Component of the ER-mitochondria encounter structure (ERMES) or MDM complex, composed of MMM1, MDM10, MDM12 and MDM34. Associates with the mitochondrial outer membrane sorting assembly machinery SAM(core) complex.

Its subcellular location is the mitochondrion outer membrane. Its function is as follows. Component of the ERMES/MDM complex, which serves as a molecular tether to connect the endoplasmic reticulum and mitochondria. Components of this complex are involved in the control of mitochondrial shape and protein biogenesis and may function in phospholipid exchange. MDM10 is involved in the late assembly steps of the general translocase of the mitochondrial outer membrane (TOM complex). Functions in the TOM40-specific route of the assembly of outer membrane beta-barrel proteins, including the association of TOM40 with the receptor TOM22 and small TOM proteins. Can associate with the SAM(core) complex as well as the MDM12-MMM1 complex, both involved in late steps of the major beta-barrel assembly pathway, that is responsible for biogenesis of all outer membrane beta-barrel proteins. May act as a switch that shuttles between both complexes and channels precursor proteins into the TOM40-specific pathway. Plays a role in mitochondrial morphology and in the inheritance of mitochondria. The polypeptide is Mitochondrial distribution and morphology protein 10 (Debaryomyces hansenii (strain ATCC 36239 / CBS 767 / BCRC 21394 / JCM 1990 / NBRC 0083 / IGC 2968) (Yeast)).